Reading from the N-terminus, the 301-residue chain is Putative S-adenosyl-L-methionine-dependent methyltransferase MMAR_4850 (301 aa).

S-adenosyl-L-methionine contacts are provided by residues Asp-127 and 156-157 (DL).

This sequence belongs to the UPF0677 family.

Functionally, exhibits S-adenosyl-L-methionine-dependent methyltransferase activity. In Mycobacterium marinum (strain ATCC BAA-535 / M), this protein is Putative S-adenosyl-L-methionine-dependent methyltransferase MMAR_4850.